Reading from the N-terminus, the 418-residue chain is Serine hydroxymethyltransferase (418 aa).

Residues Leu-118 and 122-124 (GHL) contribute to the (6S)-5,6,7,8-tetrahydrofolate site. Lys-227 bears the N6-(pyridoxal phosphate)lysine mark. Glu-242 contacts (6S)-5,6,7,8-tetrahydrofolate.

It belongs to the SHMT family. As to quaternary structure, homodimer. Pyridoxal 5'-phosphate serves as cofactor.

Its subcellular location is the cytoplasm. It carries out the reaction (6R)-5,10-methylene-5,6,7,8-tetrahydrofolate + glycine + H2O = (6S)-5,6,7,8-tetrahydrofolate + L-serine. The protein operates within one-carbon metabolism; tetrahydrofolate interconversion. It participates in amino-acid biosynthesis; glycine biosynthesis; glycine from L-serine: step 1/1. Its function is as follows. Catalyzes the reversible interconversion of serine and glycine with tetrahydrofolate (THF) serving as the one-carbon carrier. This reaction serves as the major source of one-carbon groups required for the biosynthesis of purines, thymidylate, methionine, and other important biomolecules. Also exhibits THF-independent aldolase activity toward beta-hydroxyamino acids, producing glycine and aldehydes, via a retro-aldol mechanism. The sequence is that of Serine hydroxymethyltransferase from Chloroflexus aggregans (strain MD-66 / DSM 9485).